Here is a 415-residue protein sequence, read N- to C-terminus: D-serine dehydratase (415 aa).

The residue at position 68 (lysine 68) is an N6-(pyridoxal phosphate)lysine. Residues tyrosine 204, tyrosine 211, threonine 253, glycine 279, and asparagine 280 each coordinate pyridoxal 5'-phosphate. Residues histidine 385 and cysteine 387 each coordinate Zn(2+).

The protein belongs to the DSD1 family. In terms of assembly, homodimer. Requires pyridoxal 5'-phosphate as cofactor. It depends on Zn(2+) as a cofactor.

It is found in the cytoplasm. The protein resides in the nucleus. The enzyme catalyses D-serine = pyruvate + NH4(+). Its function is as follows. Catalyzes the conversion of D-serine to pyruvate and ammonia. May play a role in D-serine detoxification. This Schizosaccharomyces pombe (strain 972 / ATCC 24843) (Fission yeast) protein is D-serine dehydratase.